A 402-amino-acid polypeptide reads, in one-letter code: Triose phosphate/phosphate translocator, non-green plastid, chloroplastic (402 aa).

The N-terminal 82 residues, Met-1–Ala-82, are a transit peptide targeting the chloroplast. Residues Ala-83–Lys-98 lie on the Chloroplast intermembrane side of the membrane. Residues Val-99 to Tyr-119 traverse the membrane as a helical segment. The region spanning Ile-118–Val-236 is the EamA domain. The Lumenal portion of the chain corresponds to Asn-120–Met-131. A helical membrane pass occupies residues Thr-132–Asn-152. Over Leu-153–Ala-209 the chain is Chloroplast intermembrane. A helical membrane pass occupies residues Met-210 to Gly-230. Residues Val-231–Thr-278 lie on the Lumenal side of the membrane. Residues Leu-279–Ser-298 form a helical membrane-spanning segment. Residues Glu-299–Val-374 are Chloroplast intermembrane-facing. Residues Asn-375–Arg-394 traverse the membrane as a helical segment. Residues Ile-395–Ala-402 are Lumenal-facing.

This sequence belongs to the TPT transporter family. TPT (TC 2.A.7.9) subfamily. As to quaternary structure, homodimer.

The protein localises to the plastid. It localises to the chloroplast membrane. Its function is as follows. Mediates the export of fixed carbons from the chloroplasts into the cytosol in the form of triose phosphates. In Brassica oleracea var. botrytis (Cauliflower), this protein is Triose phosphate/phosphate translocator, non-green plastid, chloroplastic (NGTPT).